We begin with the raw amino-acid sequence, 1339 residues long: Retrotransposon Gag-like protein 9 (1339 aa).

Composition is skewed to polar residues over residues 533-545 (TVPT…TQKT), 679-693 (SGTK…TTSG), and 700-711 (TRLSGPGATSTP). 6 disordered regions span residues 533 to 555 (TVPT…PMST), 679 to 711 (SGTK…TSTP), 845 to 864 (GVMS…SRPQ), 880 to 901 (PATA…LSTL), 982 to 1010 (ATSL…GAGS), and 1078 to 1116 (ATDS…PPKE). The span at 891–901 (RSPASSTLSTL) shows a compositional bias: low complexity. Residues 1078–1106 (ATDSGEASTSHTRFTAPGSKSTPHMTSTA) are compositionally biased toward polar residues.

The polypeptide is Retrotransposon Gag-like protein 9 (Mus musculus (Mouse)).